We begin with the raw amino-acid sequence, 782 residues long: LPS-assembly protein LptD (782 aa).

The N-terminal stretch at 1-23 (MNKKHTLISLAILTALYSQQSLA) is a signal peptide.

Belongs to the LptD family. In terms of assembly, component of the lipopolysaccharide transport and assembly complex. Interacts with LptE and LptA.

The protein resides in the cell outer membrane. Functionally, together with LptE, is involved in the assembly of lipopolysaccharide (LPS) at the surface of the outer membrane. The sequence is that of LPS-assembly protein LptD from Haemophilus influenzae (strain 86-028NP).